Consider the following 982-residue polypeptide: ATP-dependent DNA helicase Q5 (982 aa).

A Helicase ATP-binding domain is found at 39–213; that stretch reads MAVVKGAEDV…FAALHLKQPV (175 aa). Residue 52-59 participates in ATP binding; the sequence is MPTGAGKS. Residues 157-160 carry the DEAH box motif; the sequence is DEAH. One can recognise a Helicase C-terminal domain in the interval 241 to 398; that stretch reads NLRDFCLKAL…NKPSDKATLL (158 aa). Positions 412, 428, 432, and 435 each coordinate Zn(2+). Residues Ser489 and Ser492 each carry the phosphoserine modification. An interaction with POLR2A region spans residues 491–621; the sequence is GSGDEGRDEA…ASKDGQLYDM (131 aa). Residue Thr527 is modified to Phosphothreonine. The segment at 653–726 is interaction with RAD51; the sequence is PKRVGAGFSK…ALGSSVNCGD (74 aa). Disordered stretches follow at residues 675 to 797 and 812 to 893; these read GKSH…PGKC and QTEG…AQEP. Ser728 carries the post-translational modification Phosphoserine; by CDK1.

The protein belongs to the helicase family. RecQ subfamily. As to quaternary structure, monomer. Interacts with TOP2A, TOP3A and TOP3B. Interacts with RNA polymerase II subunit POLR2A. Identified in a complex with the RNA polymerase II core bound to DNA. Interacts with RAD51. Interacts with WRN; this interaction stimulates WRN helicase activity on DNA fork duplexes. Interacts with MUS1; this interaction promotes MUS81-dependent mitotic DNA synthesis. Zn(2+) is required as a cofactor. In terms of processing, phosphorylated by CDK1 at Ser-728; this phosphorylation is required for RECQL5-mediated disruption of RAD51 filaments on stalled replication forks.

The protein resides in the nucleus. The protein localises to the nucleoplasm. It catalyses the reaction Couples ATP hydrolysis with the unwinding of duplex DNA by translocating in the 3'-5' direction.. The catalysed reaction is ATP + H2O = ADP + phosphate + H(+). In terms of biological role, DNA helicase that plays an important role in DNA replication, transcription and repair. Binds to the RNA polymerase II subunit POLR2A during transcription elongation and suppresses transcription-associated genomic instability. Also associates with POLR1A and enforces the stability of ribosomal DNA arrays. Plays an important role in mitotic chromosome separation after cross-over events and cell cycle progress. Mechanistically, removes RAD51 filaments protecting stalled replication forks at common fragile sites and stimulates MUS81-EME1 endonuclease leading to mitotic DNA synthesis. Required for efficient DNA repair, including repair of inter-strand cross-links. Stimulates DNA decatenation mediated by TOP2A. Prevents sister chromatid exchange and homologous recombination. The sequence is that of ATP-dependent DNA helicase Q5 (Recql5) from Mus musculus (Mouse).